Consider the following 471-residue polypeptide: Putative multidrug resistance protein MdtD (471 aa).

The Periplasmic portion of the chain corresponds to 1–11 (MTDLPDSTRWQ). The chain crosses the membrane as a helical span at residues 12-32 (LWIVAFGFFMQSLDTTIVNTA). Residues 33 to 48 (LPSMAQSLGESPLHMH) lie on the Cytoplasmic side of the membrane. The chain crosses the membrane as a helical span at residues 49-69 (MVIVSYVLTVAVMLPASGWLA). At 70–76 (DKVGVRN) the chain is on the periplasmic side. A helical transmembrane segment spans residues 77-97 (IFFTAIVLFTLGSLFCALSGT). Residues 98–101 (LNEL) are Cytoplasmic-facing. The chain crosses the membrane as a helical span at residues 102-124 (LLARALQGVGGAMMVPVGRLTVM). The Periplasmic portion of the chain corresponds to 125–137 (KIVPREQYMAAMT). Residues 138–158 (FVTLPGQVGPLLGPALGGLLV) traverse the membrane as a helical segment. The Cytoplasmic portion of the chain corresponds to 159-164 (EYASWH). Residues 165–185 (WIFLINIPVGIIGAIATLMLM) form a helical membrane-spanning segment. Over 186–196 (PNYTMQTRRFD) the chain is Periplasmic. Residues 197-217 (LSGFLLLAVGMAVLTLALDGS) traverse the membrane as a helical segment. Residues 218–224 (KGTGFSP) are Cytoplasmic-facing. The helical transmembrane segment at 225-245 (LAIAGLVAVGVVALVLYLLHA) threads the bilayer. Residues 246–262 (QNNNRALFSLKLFRTRN) lie on the Periplasmic side of the membrane. The chain crosses the membrane as a helical span at residues 263–283 (FSLGLAGSFAGRIGSGMLPFM). Topologically, residues 284–285 (TP) are cytoplasmic. Residues 286–306 (VFLQIGLGFSPFHAGLMMIPM) form a helical membrane-spanning segment. At 307 to 341 (VLGSMGMKRIVVQVVNRFGYRRVLVATTLGLSLVT) the chain is on the periplasmic side. Residues 342-362 (LLFMTTALLGWYYVLPFVLFL) form a helical membrane-spanning segment. Residues 363 to 395 (QGMVNSTRFSSMNTLTLKDLPDNLASSGNSLLS) are Cytoplasmic-facing. A helical membrane pass occupies residues 396 to 416 (MIMQLSMSIGVTIAGLLLGLF). At 417–430 (GSQHVSVDSGTTQT) the chain is on the periplasmic side. Residues 431–451 (VFMYTWLSMAFIIALPAFVFA) traverse the membrane as a helical segment. The Cytoplasmic segment spans residues 452–471 (RVPSDTHQNVAISRRKRSAQ).

Belongs to the major facilitator superfamily. TCR/Tet family.

It localises to the cell inner membrane. In Escherichia coli O1:K1 / APEC, this protein is Putative multidrug resistance protein MdtD.